Here is a 611-residue protein sequence, read N- to C-terminus: Chaperone protein DnaK (611 aa).

T172 bears the Phosphothreonine; by autocatalysis mark. Residues 575 to 611 (AAQAAQAQQDGGNESADKQDDNVVDADYEEVNDDDKK) are disordered. Acidic residues predominate over residues 596 to 611 (NVVDADYEEVNDDDKK).

This sequence belongs to the heat shock protein 70 family.

Its function is as follows. Acts as a chaperone. This is Chaperone protein DnaK from Shouchella clausii (strain KSM-K16) (Alkalihalobacillus clausii).